The sequence spans 403 residues: tRNA pseudouridine synthase D (403 aa).

Basic and acidic residues predominate over residues 1–10 (MTVQVQDHDI). Residues 1–24 (MTVQVQDHDITTAADTAKLPQPMQ) form a disordered region. Residue D92 is the Nucleophile of the active site. A TRUD domain is found at 192–354 (GVPNYFGPQR…IKAQRRALRL (163 aa)). The segment at 217 to 240 (ARPVPESRPQPNKGKRKRVPREQN) is disordered.

It belongs to the pseudouridine synthase TruD family.

It carries out the reaction uridine(13) in tRNA = pseudouridine(13) in tRNA. Responsible for synthesis of pseudouridine from uracil-13 in transfer RNAs. In Psychrobacter arcticus (strain DSM 17307 / VKM B-2377 / 273-4), this protein is tRNA pseudouridine synthase D.